Consider the following 554-residue polypeptide: (E)-beta-caryophyllene synthase (554 aa).

The Mn(2+) site is built by Asp313 and Asp317. Residues 313 to 317 (DDIYD) carry the DDXXD motif motif. Homodimerization regions lie at residues 319-325 (YGTLDEL) and 391-427 (EAQWFFSKYKPTMQEYMKVALLSSGYMMMTINSLAVI). 2 residues coordinate Mn(2+): Asp457 and Glu465.

It belongs to the terpene synthase family. In terms of assembly, homodimer. Mn(2+) is required as a cofactor. It depends on Mg(2+) as a cofactor. As to expression, expressed in peltate glandular trichomes. Present at low levels in flowers, leaves and stems.

It carries out the reaction (2E,6E)-farnesyl diphosphate = (-)-(E)-beta-caryophyllene + diphosphate. The enzyme catalyses (2E,6E)-farnesyl diphosphate = alpha-humulene + diphosphate. It participates in secondary metabolite biosynthesis; terpenoid biosynthesis. Its function is as follows. Involved in the biosynthesis of phenolic sesquiterpenes natural products. Sesquiterpene synthase converting (2E,6E)-farnesyl diphosphate (FPP) to (E)-beta-caryophyllene and alpha-humulene. This chain is (E)-beta-caryophyllene synthase, found in Origanum vulgare (Wild marjoram).